We begin with the raw amino-acid sequence, 932 residues long: Isoleucine--tRNA ligase (932 aa).

The 'HIGH' region signature appears at 57–67 (PYANGNIHLGH). Position 552 (Glu552) interacts with L-isoleucyl-5'-AMP. Positions 593–597 (KMSKS) match the 'KMSKS' region motif. Lys596 contacts ATP. 4 residues coordinate Zn(2+): Cys889, Cys892, Cys911, and Cys914.

This sequence belongs to the class-I aminoacyl-tRNA synthetase family. IleS type 1 subfamily. Monomer. Zn(2+) is required as a cofactor.

The protein resides in the cytoplasm. It catalyses the reaction tRNA(Ile) + L-isoleucine + ATP = L-isoleucyl-tRNA(Ile) + AMP + diphosphate. Functionally, catalyzes the attachment of isoleucine to tRNA(Ile). As IleRS can inadvertently accommodate and process structurally similar amino acids such as valine, to avoid such errors it has two additional distinct tRNA(Ile)-dependent editing activities. One activity is designated as 'pretransfer' editing and involves the hydrolysis of activated Val-AMP. The other activity is designated 'posttransfer' editing and involves deacylation of mischarged Val-tRNA(Ile). The protein is Isoleucine--tRNA ligase of Lactococcus lactis subsp. lactis (strain IL1403) (Streptococcus lactis).